The sequence spans 1132 residues: Phytochrome B (1132 aa).

Residues 1–11 (MASGSRTKHSH) show a composition bias toward basic residues. The disordered stretch occupies residues 1-27 (MASGSRTKHSHQSGQGQVQAQSSGTSN). The segment covering 12–26 (QSGQGQVQAQSSGTS) has biased composition (low complexity). The 179-residue stretch at 231–409 (DVKLLCDTVV…AFGLQLNMEL (179 aa)) folds into the GAF domain. Cys336 contributes to the phytochromobilin binding site. PAS domains lie at 623 to 694 (VARE…LRGE) and 757 to 828 (DYKA…MIVL). Residues 905 to 1125 (YLCQEIKSPL…LIILDLPMTR (221 aa)) form the Histidine kinase domain.

Belongs to the phytochrome family. As to quaternary structure, homodimer. Post-translationally, contains one covalently linked phytochromobilin chromophore.

Its function is as follows. Regulatory photoreceptor which exists in two forms that are reversibly interconvertible by light: the Pr form that absorbs maximally in the red region of the spectrum and the Pfr form that absorbs maximally in the far-red region. Photoconversion of Pr to Pfr induces an array of morphogenic responses, whereas reconversion of Pfr to Pr cancels the induction of those responses. Pfr controls the expression of a number of nuclear genes including those encoding the small subunit of ribulose-bisphosphate carboxylase, chlorophyll A/B binding protein, protochlorophyllide reductase, rRNA, etc. It also controls the expression of its own gene(s) in a negative feedback fashion. The chain is Phytochrome B (PHYB) from Nicotiana tabacum (Common tobacco).